A 302-amino-acid chain; its full sequence is Oxygen-dependent coproporphyrinogen-III oxidase (302 aa).

Position 94 (S94) interacts with substrate. Residues H98 and H108 each coordinate a divalent metal cation. Catalysis depends on H108, which acts as the Proton donor. 110 to 112 (NVR) lines the substrate pocket. A divalent metal cation-binding residues include H147 and H177. The tract at residues 242 to 277 (YVEFNLVWDRGTLFGLQSGGRTESILMSMPPLARWE) is important for dimerization. 260 to 262 (GGR) is a binding site for substrate.

This sequence belongs to the aerobic coproporphyrinogen-III oxidase family. In terms of assembly, homodimer. A divalent metal cation serves as cofactor.

The protein localises to the cytoplasm. The enzyme catalyses coproporphyrinogen III + O2 + 2 H(+) = protoporphyrinogen IX + 2 CO2 + 2 H2O. The protein operates within porphyrin-containing compound metabolism; protoporphyrin-IX biosynthesis; protoporphyrinogen-IX from coproporphyrinogen-III (O2 route): step 1/1. In terms of biological role, involved in the heme biosynthesis. Catalyzes the aerobic oxidative decarboxylation of propionate groups of rings A and B of coproporphyrinogen-III to yield the vinyl groups in protoporphyrinogen-IX. The protein is Oxygen-dependent coproporphyrinogen-III oxidase of Photorhabdus laumondii subsp. laumondii (strain DSM 15139 / CIP 105565 / TT01) (Photorhabdus luminescens subsp. laumondii).